The primary structure comprises 139 residues: Low molecular weight protein-tyrosine-phosphatase PtpB (139 aa).

Residue Cys7 is the Nucleophile of the active site. Arg13 is a catalytic residue. Asp111 serves as the catalytic Proton donor.

Belongs to the low molecular weight phosphotyrosine protein phosphatase family.

It catalyses the reaction O-phospho-L-tyrosyl-[protein] + H2O = L-tyrosyl-[protein] + phosphate. Inhibited by N-ethylmaleimide and sodium orthovanadate. Functionally, dephosphorylates the phosphotyrosine-containing proteins. The polypeptide is Low molecular weight protein-tyrosine-phosphatase PtpB (ptpB) (Staphylococcus aureus).